The following is a 197-amino-acid chain: 7-methyl-GTP pyrophosphatase (197 aa).

Aspartate 72 serves as the catalytic Proton acceptor.

This sequence belongs to the Maf family. YceF subfamily. It depends on a divalent metal cation as a cofactor.

It localises to the cytoplasm. It carries out the reaction N(7)-methyl-GTP + H2O = N(7)-methyl-GMP + diphosphate + H(+). Nucleoside triphosphate pyrophosphatase that hydrolyzes 7-methyl-GTP (m(7)GTP). May have a dual role in cell division arrest and in preventing the incorporation of modified nucleotides into cellular nucleic acids. The chain is 7-methyl-GTP pyrophosphatase from Bordetella avium (strain 197N).